A 471-amino-acid chain; its full sequence is Serine hydroxymethyltransferase, cytosolic (471 aa).

Lysine 249 carries the N6-(pyridoxal phosphate)lysine modification.

This sequence belongs to the SHMT family. The cofactor is pyridoxal 5'-phosphate.

The protein localises to the cytoplasm. It localises to the cytosol. The catalysed reaction is (6R)-5,10-methylene-5,6,7,8-tetrahydrofolate + glycine + H2O = (6S)-5,6,7,8-tetrahydrofolate + L-serine. It participates in one-carbon metabolism; tetrahydrofolate interconversion. Its function is as follows. Catalyzes the interconversion of serine and glycine. Essential for viability and required for virulence in a murine model of established pulmonary infection. This is Serine hydroxymethyltransferase, cytosolic from Aspergillus fumigatus (strain ATCC MYA-4609 / CBS 101355 / FGSC A1100 / Af293) (Neosartorya fumigata).